Consider the following 461-residue polypeptide: Ribulose bisphosphate carboxylase (461 aa).

Residue asparagine 113 participates in substrate binding. Residue lysine 168 is the Proton acceptor of the active site. Lysine 170 is a substrate binding site. Residues lysine 193, aspartate 195, and glutamate 196 each contribute to the Mg(2+) site. The residue at position 193 (lysine 193) is an N6-carboxylysine. The Proton acceptor role is filled by histidine 289. Residues arginine 290, histidine 323, and serine 370 each coordinate substrate.

Belongs to the RuBisCO large chain family. Type II subfamily. Homodimer. It depends on Mg(2+) as a cofactor.

The catalysed reaction is 2 (2R)-3-phosphoglycerate + 2 H(+) = D-ribulose 1,5-bisphosphate + CO2 + H2O. The enzyme catalyses D-ribulose 1,5-bisphosphate + O2 = 2-phosphoglycolate + (2R)-3-phosphoglycerate + 2 H(+). In terms of biological role, ruBisCO catalyzes two reactions: the carboxylation of D-ribulose 1,5-bisphosphate, the primary event in carbon dioxide fixation, as well as the oxidative fragmentation of the pentose substrate. Both reactions occur simultaneously and in competition at the same active site. The protein is Ribulose bisphosphate carboxylase of Thiomonas intermedia (strain K12) (Thiobacillus intermedius).